We begin with the raw amino-acid sequence, 124 residues long: S-adenosylmethionine decarboxylase proenzyme (124 aa).

Ser-63 (schiff-base intermediate with substrate; via pyruvic acid) is an active-site residue. Residue Ser-63 is modified to Pyruvic acid (Ser); by autocatalysis. His-68 serves as the catalytic Proton acceptor; for processing activity. The active-site Proton donor; for catalytic activity is the Cys-83.

The protein belongs to the prokaryotic AdoMetDC family. Type 1 subfamily. In terms of assembly, heterotetramer of two alpha and two beta chains arranged as a dimer of alpha/beta heterodimers. Pyruvate is required as a cofactor. Is synthesized initially as an inactive proenzyme. Formation of the active enzyme involves a self-maturation process in which the active site pyruvoyl group is generated from an internal serine residue via an autocatalytic post-translational modification. Two non-identical subunits are generated from the proenzyme in this reaction, and the pyruvate is formed at the N-terminus of the alpha chain, which is derived from the carboxyl end of the proenzyme. The post-translation cleavage follows an unusual pathway, termed non-hydrolytic serinolysis, in which the side chain hydroxyl group of the serine supplies its oxygen atom to form the C-terminus of the beta chain, while the remainder of the serine residue undergoes an oxidative deamination to produce ammonia and the pyruvoyl group blocking the N-terminus of the alpha chain.

The catalysed reaction is S-adenosyl-L-methionine + H(+) = S-adenosyl 3-(methylsulfanyl)propylamine + CO2. It participates in amine and polyamine biosynthesis; S-adenosylmethioninamine biosynthesis; S-adenosylmethioninamine from S-adenosyl-L-methionine: step 1/1. Catalyzes the decarboxylation of S-adenosylmethionine to S-adenosylmethioninamine (dcAdoMet), the propylamine donor required for the synthesis of the polyamines spermine and spermidine from the diamine putrescine. The sequence is that of S-adenosylmethionine decarboxylase proenzyme from Acetivibrio thermocellus (strain ATCC 27405 / DSM 1237 / JCM 9322 / NBRC 103400 / NCIMB 10682 / NRRL B-4536 / VPI 7372) (Clostridium thermocellum).